Consider the following 438-residue polypeptide: Polycomb protein eed-A (438 aa).

The segment at 1–67 (MSEASGRAAG…NAPGRKAWGK (67 aa)) is disordered. A compositionally biased stretch (polar residues) spans 40 to 57 (SIESGTNTERPDTPTNAA). WD repeat units lie at residues 88 to 131 (DHNQ…DIRL), 139 to 182 (DADE…CIKH), 185 to 225 (GHGN…LVAI), 231 to 270 (GHRD…MKTA), 301 to 338 (IHRN…DDID), 356 to 396 (SQCD…PHKA), and 405 to 438 (KCAS…DRLR).

This sequence belongs to the WD repeat ESC family. Component of the prc2/eed-ezh2 complex. Interacts with yy1. Can interact with ezh2, hdac1 and taf9.

The protein resides in the nucleus. Its function is as follows. Polycomb group (PcG) protein. Component of the prc2/eed-ezh2 complex, which methylates 'Lys-9' and 'Lys-27' of histone H3, leading to transcriptional repression of the affected target gene. The polypeptide is Polycomb protein eed-A (eed-a) (Xenopus laevis (African clawed frog)).